We begin with the raw amino-acid sequence, 110 residues long: BolA-like protein 3 (110 aa).

Belongs to the BolA/IbaG family. In terms of assembly, interacts with NFU1.

Its subcellular location is the mitochondrion. Acts as a mitochondrial iron-sulfur (Fe-S) cluster assembly factor that facilitates (Fe-S) cluster insertion into a subset of mitochondrial proteins. Probably acts together with NFU1. This is BolA-like protein 3 (Bola3) from Mus musculus (Mouse).